We begin with the raw amino-acid sequence, 291 residues long: m-AAA protease-interacting protein 1, mitochondrial (291 aa).

A mitochondrion-targeting transit peptide spans Met1 to Tyr96.

As to quaternary structure, interacts with AFG3L2. Interacts with SPG7. Interacts with SMDT1/EMRE (via the N-terminal transit peptide); interaction is direct and takes place before maturation of SMDT1/EMRE.

It localises to the mitochondrion matrix. In terms of biological role, promotes sorting of SMDT1/EMRE in mitochondria by ensuring its maturation. Interacts with the transit peptide region of SMDT1/EMRE precursor protein in the mitochondrial matrix, leading to protect it against protein degradation by YME1L1, thereby ensuring SMDT1/EMRE maturation by the mitochondrial processing peptidase (PMPCA and PMPCB). The protein is m-AAA protease-interacting protein 1, mitochondrial of Bos taurus (Bovine).